A 356-amino-acid chain; its full sequence is Glutamine synthetase (356 aa).

In terms of domain architecture, GS beta-grasp spans Val-19–Gly-99. In terms of domain architecture, GS catalytic spans Lys-106–Pro-356.

This sequence belongs to the glutamine synthetase family. Homooctamer. As to expression, found at highest levels in root nodules.

The protein localises to the cytoplasm. It catalyses the reaction L-glutamate + NH4(+) + ATP = L-glutamine + ADP + phosphate + H(+). This Alnus glutinosa (European alder) protein is Glutamine synthetase (GLN1).